Here is a 336-residue protein sequence, read N- to C-terminus: Atypical chemokine receptor 1 (336 aa).

Topologically, residues 1–63 (MGNCLHQAEL…CNLLDDSSLP (63 aa)) are extracellular. N-linked (GlcNAc...) asparagine glycosylation is found at N16, N27, and N33. 2 cysteine pairs are disulfide-bonded: C51/C276 and C129/C195. A helical membrane pass occupies residues 64-84 (FFILASVLGILASSTVLFLLF). Residues 85–95 (RPLFRWQLCPG) are Cytoplasmic-facing. A helical membrane pass occupies residues 96 to 116 (WPVLAQLAVGSTLFSIVVPIL). Residues 117-129 (APGLGNTRSSAPC) lie on the Extracellular side of the membrane. Residues 130 to 153 (SLGYCVWYGSAFAQALLLGCHASL) traverse the membrane as a helical segment. At 154-166 (GPKLGAGQVPGLT) the chain is on the cytoplasmic side. A helical membrane pass occupies residues 167–187 (LGLSVGLWGAAALLTLPITLA). Topologically, residues 188–207 (SDASDGLCTPIYSTELKALQ) are extracellular. Residues 208-228 (ATHTVACFAIFVLLPLGLFGA) traverse the membrane as a helical segment. Residues 229–244 (KGLKKVLGMGPGPWMN) lie on the Cytoplasmic side of the membrane. The helical transmembrane segment at 245–265 (ILWVWFIFWWPHGVVLGLDFL) threads the bilayer. Over 266–287 (VRSKLLLLPTCLAQQVLDLLLN) the chain is Extracellular. A helical membrane pass occupies residues 288 to 308 (LAEALAIVHCVATPLLLALFC). Topologically, residues 309-336 (HQATRTLVPSLPLPERWSSPVDTLGSKS) are cytoplasmic.

It belongs to the G-protein coupled receptor 1 family. Atypical chemokine receptor subfamily.

The protein localises to the early endosome. It is found in the recycling endosome. The protein resides in the membrane. Its function is as follows. Atypical chemokine receptor that controls chemokine levels and localization via high-affinity chemokine binding that is uncoupled from classic ligand-driven signal transduction cascades, resulting instead in chemokine sequestration, degradation, or transcytosis. Also known as interceptor (internalizing receptor) or chemokine-scavenging receptor or chemokine decoy receptor. Has a promiscuous chemokine-binding profile, interacting with inflammatory chemokines of both the CXC and the CC subfamilies but not with homeostatic chemokines. Acts as a receptor for chemokines including CCL2, CCL5, CCL7, CCL11, CCL13, CCL14, CCL17, CXCL5, CXCL6, IL8/CXCL8, CXCL11, GRO, RANTES, MCP-1 and TARC. May regulate chemokine bioavailability and, consequently, leukocyte recruitment through two distinct mechanisms: when expressed in endothelial cells, it sustains the abluminal to luminal transcytosis of tissue-derived chemokines and their subsequent presentation to circulating leukocytes; when expressed in erythrocytes, serves as blood reservoir of cognate chemokines but also as a chemokine sink, buffering potential surges in plasma chemokine levels. This is Atypical chemokine receptor 1 (ACKR1) from Saguinus imperator (Emperor tamarin).